Consider the following 793-residue polypeptide: MTKKLTLKRKGKEPEPTNEVAASSEASDNEEEEDLLQAVKDPGEDTTDDEGIDQEYQSDSSEDLEFESDEEGNYLGRKKGDGSSEEEDDDGDEEGEEEDEEEDDSEDGESADDGDEEKPTTSKQNKSEDEPSSSKVSKKTQPPTKDLVKRDPSHPEYHDSDTSDEEDIRNTVGNIPMHWYDEYKHIGYDWDAKKIVKPPQGDQIDEFLRKIEDPNFWRTVKDPQTGQEVLITDEDIALIKRIISGRIPNKDHNEYEPWVEWFTSEVEKMPIKNVPDHKRSFLPSVSEKKRVGRMVHALKMGWMKTTEEVEREKQAKRGPKFYMLWETDTSREHMRRIHDPVSAPKRDLPGHAESYNPPPEYLFDERETKEWLKLKDEPHKRKLHFMPQKFTSLRAVPAYSRYLRERFLRCLDLYLCPRAKRVKLNIDAEYLIPKLPSPRDLQPFPTIESLVYRGHTDLVRSVSVEPKGEYIVSGSDDKTVKIWEIATGRCIRTIETEDVVRCVAWCPNAKLSIIAVATGNRLLLINPKVGDKVLVKKTDDLLAEEPSSDVIESERIKAAVQWATAEPAEQEKGVRVVINHFKPIRQVTWHGRGDYLATVMPEGANRSALIHQLSKRRSQIPFSKSKGLIQCVLFHPVKPCFFVATQHNIRIYDLVKQELVKKLLTNSKWISGMSIHPKGDNLLVSTYDKKMLWFDLDLSTKPYQTMRLHRNAVRSVAFHLRYPLFASGSDDQAVIVSHGMVYNDLLQNPLIVPLKKLQTHEKREDFGVLDVNWHPIQPWIFSTGADCTIRLYT.

Residues 1–11 are compositionally biased toward basic residues; the sequence is MTKKLTLKRKG. The disordered stretch occupies residues 1-168; that stretch reads MTKKLTLKRK…DSDTSDEEDI (168 aa). Acidic residues-rich tracts occupy residues 44-53, 60-72, and 83-116; these read EDTTDDEGID, SSED…DEEG, and SSEE…DGDE. Residues 117–129 are compositionally biased toward basic and acidic residues; that stretch reads EKPTTSKQNKSED. The segment covering 133–143 has biased composition (polar residues); that stretch reads SSKVSKKTQPP. Residues 146-161 are compositionally biased toward basic and acidic residues; that stretch reads DLVKRDPSHPEYHDSD. WD repeat units follow at residues 454 to 495, 497 to 535, 579 to 621, 624 to 662, 665 to 704, 708 to 747, and 763 to 793; these read GHTD…RTIE, EDVV…KVLV, NHFK…SQIP, KSKG…LVKK, TNSK…KPYQ, LHRN…DLLQ, and REDF…RLYT.

The protein belongs to the WD repeat BOP1/ERB1 family.

It is found in the nucleus. Its subcellular location is the nucleolus. The protein localises to the nucleoplasm. Required for maturation of ribosomal RNAs and formation of the large ribosomal subunit. The polypeptide is Ribosome biogenesis protein BOP1 homolog (Drosophila ananassae (Fruit fly)).